Here is a 351-residue protein sequence, read N- to C-terminus: Nitronate monooxygenase (351 aa).

Residues Leu21, Asn69, Gln176, Gly181, Gly218, and 237-240 each bind FMN; that span reads QMGT.

It belongs to the nitronate monooxygenase family. NMO class I subfamily. Requires FMN as cofactor.

It carries out the reaction 3 propionate 3-nitronate + 3 O2 + H2O = 3 3-oxopropanoate + 2 nitrate + nitrite + H2O2 + 3 H(+). In terms of biological role, nitronate monooxygenase that uses molecular oxygen to catalyze the oxidative denitrification of alkyl nitronates. The toxin propionate 3-nitronate (P3N) is the best substrate (and the presumed physiological substrate), but this enzyme is also active on other primary and secondary nitronates such as propyl-1-nitronate, ethylnitronate, pentyl-1-nitronate, butyl-1-nitronate and propyl-2-nitronate. Is likely involved in the degradation of P3N, that allows P.aeruginosa PAO1 to grow on 3-nitropropionate/P3N as the sole nitrogen source. Also functions in the detoxification of P3N, a metabolic poison produced by plants and fungi as a defense mechanism. Cannot oxidize nitroalkanes such as 3-nitropropionate, nitroethane, 1-nitropropane, 1-nitrobutane, 1-nitropentane, or 2-nitropropane. This Pseudomonas aeruginosa (strain ATCC 15692 / DSM 22644 / CIP 104116 / JCM 14847 / LMG 12228 / 1C / PRS 101 / PAO1) protein is Nitronate monooxygenase.